The following is a 705-amino-acid chain: Polyribonucleotide nucleotidyltransferase (705 aa).

Residues Asp486 and Asp492 each coordinate Mg(2+). Positions 553 to 612 (PRIIKFKINPEKIRDVIGKGGAVIRALTEETGTTIDISDDGSVTIASISNEGGEQAKRRI) constitute a KH domain. Residues 622–690 (GKIYEGTVLK…DKGRLRLSMK (69 aa)) enclose the S1 motif domain.

It belongs to the polyribonucleotide nucleotidyltransferase family. It depends on Mg(2+) as a cofactor.

It is found in the cytoplasm. It catalyses the reaction RNA(n+1) + phosphate = RNA(n) + a ribonucleoside 5'-diphosphate. Its function is as follows. Involved in mRNA degradation. Catalyzes the phosphorolysis of single-stranded polyribonucleotides processively in the 3'- to 5'-direction. This chain is Polyribonucleotide nucleotidyltransferase, found in Nitrosomonas eutropha (strain DSM 101675 / C91 / Nm57).